Reading from the N-terminus, the 732-residue chain is Protein kinase YpkA (732 aa).

The 273-residue stretch at 136 to 408 (VAETDKFAEG…SNEARLHEFL (273 aa)) folds into the Protein kinase domain. Residues 142–150 (FAEGESHIS) and Lys163 each bind ATP. The Proton acceptor role is filled by Asp270.

The protein belongs to the protein kinase superfamily. Ser/Thr protein kinase family.

Its subcellular location is the secreted. The enzyme catalyses L-seryl-[protein] + ATP = O-phospho-L-seryl-[protein] + ADP + H(+). It carries out the reaction L-threonyl-[protein] + ATP = O-phospho-L-threonyl-[protein] + ADP + H(+). In terms of biological role, acts as a virulence determinant. The sequence is that of Protein kinase YpkA (ypkA) from Yersinia pestis.